The chain runs to 251 residues: Probable transcriptional regulatory protein Amuc_0709 (251 aa).

This sequence belongs to the TACO1 family.

It is found in the cytoplasm. This is Probable transcriptional regulatory protein Amuc_0709 from Akkermansia muciniphila (strain ATCC BAA-835 / DSM 22959 / JCM 33894 / BCRC 81048 / CCUG 64013 / CIP 107961 / Muc).